The primary structure comprises 1026 residues: Isoleucine--tRNA ligase (1026 aa).

Positions 51-61 match the 'HIGH' region motif; that stretch reads PTANGRPHIGH. The short motif at 591–595 is the 'KMSKS' region element; that stretch reads KMSKS. Lys594 lines the ATP pocket.

It belongs to the class-I aminoacyl-tRNA synthetase family. IleS type 2 subfamily. As to quaternary structure, monomer. Requires Zn(2+) as cofactor.

It localises to the cytoplasm. It catalyses the reaction tRNA(Ile) + L-isoleucine + ATP = L-isoleucyl-tRNA(Ile) + AMP + diphosphate. Functionally, catalyzes the attachment of isoleucine to tRNA(Ile). As IleRS can inadvertently accommodate and process structurally similar amino acids such as valine, to avoid such errors it has two additional distinct tRNA(Ile)-dependent editing activities. One activity is designated as 'pretransfer' editing and involves the hydrolysis of activated Val-AMP. The other activity is designated 'posttransfer' editing and involves deacylation of mischarged Val-tRNA(Ile). In Thermoplasma acidophilum (strain ATCC 25905 / DSM 1728 / JCM 9062 / NBRC 15155 / AMRC-C165), this protein is Isoleucine--tRNA ligase.